Here is a 510-residue protein sequence, read N- to C-terminus: Glutamate--tRNA ligase (510 aa).

The short motif at 15–25 is the 'HIGH' region element; sequence PSPTGDPHVGT. A 'KMSKS' region motif is present at residues 256–260; that stretch reads KISKR. An ATP-binding site is contributed by Lys-259.

The protein belongs to the class-I aminoacyl-tRNA synthetase family. Glutamate--tRNA ligase type 1 subfamily. Monomer.

It is found in the cytoplasm. It catalyses the reaction tRNA(Glu) + L-glutamate + ATP = L-glutamyl-tRNA(Glu) + AMP + diphosphate. Its function is as follows. Catalyzes the attachment of glutamate to tRNA(Glu) in a two-step reaction: glutamate is first activated by ATP to form Glu-AMP and then transferred to the acceptor end of tRNA(Glu). The polypeptide is Glutamate--tRNA ligase (Fusobacterium nucleatum subsp. nucleatum (strain ATCC 25586 / DSM 15643 / BCRC 10681 / CIP 101130 / JCM 8532 / KCTC 2640 / LMG 13131 / VPI 4355)).